The chain runs to 62 residues: MRNMVNKDQVAGLAKQLKGSVKQAAGKATGNRRTQAEGMADKVAGKVQKAYGDVKDKVKKAF.

The segment at 1-42 (MRNMVNKDQVAGLAKQLKGSVKQAAGKATGNRRTQAEGMADK) is disordered.

The protein belongs to the UPF0337 (CsbD) family.

The chain is UPF0337 protein mll8179 from Mesorhizobium japonicum (strain LMG 29417 / CECT 9101 / MAFF 303099) (Mesorhizobium loti (strain MAFF 303099)).